The primary structure comprises 633 residues: ATP-dependent clpX-like chaperone, mitochondrial (633 aa).

The N-terminal 56 residues, methionine 1–threonine 56, are a transit peptide targeting the mitochondrion. Positions alanine 65–asparagine 101 are disordered. The span at glycine 69–valine 83 shows a compositional bias: basic and acidic residues. The span at threonine 84–serine 93 shows a compositional bias: low complexity. A ClpX-type ZB domain is found at serine 93–isoleucine 146. Residues cysteine 105, cysteine 108, cysteine 127, and cysteine 130 each contribute to the Zn(2+) site. Proline 294 to leucine 301 is a binding site for ATP. Lysine 437 carries the N6-acetyllysine modification. Over residues lysine 598–serine 610 the composition is skewed to basic and acidic residues. Residues lysine 598–serine 633 are disordered. Positions serine 611–aspartate 622 are enriched in acidic residues. Position 617 is a phosphoserine (serine 617).

The protein belongs to the ClpX chaperone family. Homohexamer that forms a ring structure; this hexamerization requires ATP binding. Component of the ClpXP complex formed by the assembly of two CLPP heptameric rings with two CLPX hexameric rings, giving rise to a symmetrical structure with two central CLPP rings flanked by a CLPX ring at either end of the complex. Interacts with TFAM.

It is found in the mitochondrion. Its subcellular location is the mitochondrion matrix. The protein localises to the mitochondrion nucleoid. The catalysed reaction is ATP + H2O = ADP + phosphate + H(+). ATP-dependent chaperone that functions as an unfoldase. As part of the ClpXP protease complex, it recognizes specific protein substrates, unfolds them using energy derived from ATP hydrolysis, and then translocates them to the proteolytic subunit (CLPP) of the ClpXP complex for degradation. Thanks to its chaperone activity, it also functions in the incorporation of the pyridoxal phosphate cofactor into 5-aminolevulinate synthase, thereby activating 5-aminolevulinate (ALA) synthesis, the first step in heme biosynthesis. This chaperone is also involved in the control of mtDNA nucleoid distribution, by regulating mitochondrial transcription factor A (TFAM) activity. The chain is ATP-dependent clpX-like chaperone, mitochondrial from Rattus norvegicus (Rat).